The chain runs to 510 residues: GMP synthase [glutamine-hydrolyzing] (510 aa).

Residues 5-194 (DILVLDFGSQ…FAKICGCEST (190 aa)) enclose the Glutamine amidotransferase type-1 domain. The active-site Nucleophile is the C82. Active-site residues include H169 and E171. Positions 195–385 (WNMGSFAKKE…LGLSRDIVYR (191 aa)) constitute a GMPS ATP-PPase domain. 222 to 228 (SGGVDSS) contacts ATP.

As to quaternary structure, homodimer.

It catalyses the reaction XMP + L-glutamine + ATP + H2O = GMP + L-glutamate + AMP + diphosphate + 2 H(+). It participates in purine metabolism; GMP biosynthesis; GMP from XMP (L-Gln route): step 1/1. Its function is as follows. Catalyzes the synthesis of GMP from XMP. The sequence is that of GMP synthase [glutamine-hydrolyzing] from Campylobacter fetus subsp. fetus (strain 82-40).